The sequence spans 1191 residues: MARPRDSRSPSPAGSTHSSRRFRNDDRRDRDRRNDGRDHRRRTRSRSPDPRNRDRDRDRDRDRARDRDNYRRRDRSLDRRDDNHYRGGRRDNRERDRRRSRDRFDDRIRSPMTDRRRNRSRENDRDVRRRDDSRSRISGRREGTTDSPARSNRDDGRNQKTPLDDSGNGGASQAQTPKAEGGQADVDKKAERLAKLEAWKKKKESASQKQKEVNPSQTRNLLAEMDKKASGASSKTVSPSVSAIASPAATPTVESPAASYSGKFDPKAIAKKSAASRAHDASKPALGSLEGQPEKISVPVKQATTASALPANRTKASGFGFVKTNAETEKLTAKRKLDLDEEDTTKRKLTKLPALPIEADDTPYADQDDDESDGDNFAENEEEAAAAARAAHERRLQAENQMDTAEEETKPTDVETNGDVAMNNNASQPEPATQMEVDEEDDVDPLDAFMADLKQTDVRQPTKTSTTQKIQEPEAYFSDDEYDFNKKDEGDASALLAITAKRKKKDIPTIDYSKIEIEPIRKNFWHEPAELSLLTEAEVADLRLELDGIKVNGKDVPKPVQKWAQCGLTRQTLDVVDNLGYEKPTPIQMQALPALMSGRDVIGVAKTGSGKTVAFLLPMFRHIKDQPPLKDTDGPIGLIMTPTRELAVQIHKDCKPFLKMMGLRAVCAYGGAPIREQIAELKRGAEIIVCTPGRMIDLLAANQGRVTNLKRVTYVVLDEADRMFDMGFEPQVMKIFANMRPDRQTILFSATMPRIIDSLTKKVLKNPIEVTVGGRSVVAKEIEQIVEVRDEPSKFHRVLELLGELYDRDEDARTLIFVERQEKADDLLKELMMKGYPCMSIHGGKDQIDRDSTISDFKKGVVPILIATSVAARGLDVKQLKLVINYDAPNHLEDYVHRAGRTGRAGNTGVAVTFVTPEQENCAPGIAKALEQSGQPIPDRLNEMRKAHREKVKSGKAKDTSGFGGKGLDRLDQEREAARLRERKVHKAEGEEEEVTEDKKEDEDEKAEKALDAIRAAASGVLARESAKADDADAKSMPPVKTSGVVKDKAKDPLDKVSSAVSAINSRLGKAGQLRAGQPIDNKGPDAGAFHATLEINDFPQKARWAVTNRTNVAKILEATGTSITTKGNFYPAGKEVPAGAEPKLYILIEGDTEVVVSSALTELTRLLREGTIAAVDADSRAPASGRYTIT.

The segment at 1–436 (MARPRDSRSP…SQPEPATQME (436 aa)) is disordered. 3 stretches are compositionally biased toward basic and acidic residues: residues 22–38 (FRND…DGRD), 46–144 (RSPD…REGT), and 185–212 (DVDK…KQKE). Residues 236-253 (TVSPSVSAIASPAATPTV) show a composition bias toward low complexity. Basic and acidic residues predominate over residues 326-338 (AETEKLTAKRKLD). Residues 358 to 384 (EADDTPYADQDDDESDGDNFAENEEEA) are compositionally biased toward acidic residues. The segment covering 422–431 (MNNNASQPEP) has biased composition (polar residues). The Q motif motif lies at 561-589 (QKWAQCGLTRQTLDVVDNLGYEKPTPIQM). Residues 592-770 (LPALMSGRDV…KKVLKNPIEV (179 aa)) enclose the Helicase ATP-binding domain. 605 to 612 (AKTGSGKT) contributes to the ATP binding site. The DEAD box signature appears at 718 to 721 (DEAD). Positions 801–945 (LLGELYDRDE…PIPDRLNEMR (145 aa)) constitute a Helicase C-terminal domain. 2 disordered regions span residues 946–1008 (KAHR…EKAE) and 1025–1051 (ESAK…DKAK). The segment covering 967–980 (GLDRLDQEREAARL) has biased composition (basic and acidic residues). Positions 969–1018 (DRLDQEREAARLRERKVHKAEGEEEEVTEDKKEDEDEKAEKALDAIRAAA) form a coiled coil. Residues 990–1005 (GEEEEVTEDKKEDEDE) are compositionally biased toward acidic residues. The span at 1025–1034 (ESAKADDADA) shows a compositional bias: basic and acidic residues.

It belongs to the DEAD box helicase family. DDX46/PRP5 subfamily.

It is found in the nucleus. The enzyme catalyses ATP + H2O = ADP + phosphate + H(+). Its function is as follows. ATP-dependent RNA helicase involved spliceosome assembly and in nuclear splicing. Catalyzes an ATP-dependent conformational change of U2 snRNP. Bridges U1 and U2 snRNPs and enables stable U2 snRNP association with intron RNA. This is Pre-mRNA-processing ATP-dependent RNA helicase PRP5 (PRP5) from Gibberella zeae (strain ATCC MYA-4620 / CBS 123657 / FGSC 9075 / NRRL 31084 / PH-1) (Wheat head blight fungus).